We begin with the raw amino-acid sequence, 70 residues long: Conotoxin Im11.11 (70 aa).

Residues 1–25 (MFRLTSVGCILLVIAFLNLVGLTNA) form the signal peptide. Intrachain disulfides connect C26/C40, C33/C45, C39/C49, and C44/C53. Proline amide is present on P56. The propeptide occupies 60–70 (TRLQGFFKHRR).

The protein belongs to the conotoxin I2 superfamily. In terms of tissue distribution, expressed by the venom duct.

The protein localises to the secreted. Probable neurotoxin. The polypeptide is Conotoxin Im11.11 (Conus imperialis (Imperial cone)).